The following is a 342-amino-acid chain: 4-hydroxy-3-methylbut-2-enyl diphosphate reductase (342 aa).

[4Fe-4S] cluster is bound at residue cysteine 47. Residues histidine 78 and histidine 111 each contribute to the (2E)-4-hydroxy-3-methylbut-2-enyl diphosphate site. Dimethylallyl diphosphate contacts are provided by histidine 78 and histidine 111. Isopentenyl diphosphate contacts are provided by histidine 78 and histidine 111. Residue cysteine 133 participates in [4Fe-4S] cluster binding. Histidine 161 serves as a coordination point for (2E)-4-hydroxy-3-methylbut-2-enyl diphosphate. Histidine 161 contributes to the dimethylallyl diphosphate binding site. Histidine 161 is an isopentenyl diphosphate binding site. The Proton donor role is filled by glutamate 163. Threonine 201 serves as a coordination point for (2E)-4-hydroxy-3-methylbut-2-enyl diphosphate. Cysteine 231 serves as a coordination point for [4Fe-4S] cluster. 4 residues coordinate (2E)-4-hydroxy-3-methylbut-2-enyl diphosphate: serine 259, serine 260, asparagine 261, and serine 303. Positions 259, 260, 261, and 303 each coordinate dimethylallyl diphosphate. Serine 259, serine 260, asparagine 261, and serine 303 together coordinate isopentenyl diphosphate.

The protein belongs to the IspH family. The cofactor is [4Fe-4S] cluster.

The catalysed reaction is isopentenyl diphosphate + 2 oxidized [2Fe-2S]-[ferredoxin] + H2O = (2E)-4-hydroxy-3-methylbut-2-enyl diphosphate + 2 reduced [2Fe-2S]-[ferredoxin] + 2 H(+). The enzyme catalyses dimethylallyl diphosphate + 2 oxidized [2Fe-2S]-[ferredoxin] + H2O = (2E)-4-hydroxy-3-methylbut-2-enyl diphosphate + 2 reduced [2Fe-2S]-[ferredoxin] + 2 H(+). It participates in isoprenoid biosynthesis; dimethylallyl diphosphate biosynthesis; dimethylallyl diphosphate from (2E)-4-hydroxy-3-methylbutenyl diphosphate: step 1/1. The protein operates within isoprenoid biosynthesis; isopentenyl diphosphate biosynthesis via DXP pathway; isopentenyl diphosphate from 1-deoxy-D-xylulose 5-phosphate: step 6/6. Functionally, catalyzes the conversion of 1-hydroxy-2-methyl-2-(E)-butenyl 4-diphosphate (HMBPP) into a mixture of isopentenyl diphosphate (IPP) and dimethylallyl diphosphate (DMAPP). Acts in the terminal step of the DOXP/MEP pathway for isoprenoid precursor biosynthesis. This chain is 4-hydroxy-3-methylbut-2-enyl diphosphate reductase, found in Anaplasma marginale (strain Florida).